A 469-amino-acid polypeptide reads, in one-letter code: ATP synthase subunit beta (469 aa).

Gly156–Thr163 contributes to the ATP binding site.

This sequence belongs to the ATPase alpha/beta chains family. In terms of assembly, F-type ATPases have 2 components, CF(1) - the catalytic core - and CF(0) - the membrane proton channel. CF(1) has five subunits: alpha(3), beta(3), gamma(1), delta(1), epsilon(1). CF(0) has three main subunits: a(1), b(2) and c(9-12). The alpha and beta chains form an alternating ring which encloses part of the gamma chain. CF(1) is attached to CF(0) by a central stalk formed by the gamma and epsilon chains, while a peripheral stalk is formed by the delta and b chains.

The protein resides in the cell membrane. It catalyses the reaction ATP + H2O + 4 H(+)(in) = ADP + phosphate + 5 H(+)(out). Functionally, produces ATP from ADP in the presence of a proton gradient across the membrane. The catalytic sites are hosted primarily by the beta subunits. The protein is ATP synthase subunit beta of Lactococcus lactis subsp. cremoris (strain MG1363).